Here is a 110-residue protein sequence, read N- to C-terminus: Large ribosomal subunit protein eL30 (110 aa).

It belongs to the eukaryotic ribosomal protein eL30 family.

In Methanocaldococcus jannaschii (strain ATCC 43067 / DSM 2661 / JAL-1 / JCM 10045 / NBRC 100440) (Methanococcus jannaschii), this protein is Large ribosomal subunit protein eL30 (rpl30e).